Reading from the N-terminus, the 359-residue chain is MENKKVIVGISGGVDSSVSALLLKQQGYDVTGVFMKNWEEDDTDEFCSAEQDIADAQAVCDSIGIPFKKINFAAEYWDNVFEHFLIEYKAGRTPNPDILCNKEIKFKAFLSYVHLLGGDYIATGHYAQTRLAADGSVQLVKGLDDNKDQTYFLYTLGQEQLRQTIFPIGNIEKSKVREIAKENNLVTFDKKDSTGICFIGERKFKEFLSKYLPAQKGEIHDENGIKIGMHDGLMYYTIGQRQGLGIGGVKDRPEVPWFAAKKDLENNVLIAVQGHDHPLLFKQSLQAIELSWVAGMAPADKFRCAAKVRYRQKDQSCEVEVNQDGSVNVTFDQPQRAITPGQSVVFYIDDVCLGGGVII.

Residues 9-16 and M35 each bind ATP; that span reads GISGGVDS. Residues 95–97 form an interaction with target base in tRNA region; sequence NPD. The Nucleophile role is filled by C100. A disulfide bridge links C100 with C197. Position 124 (G124) interacts with ATP. The tract at residues 147 to 149 is interaction with tRNA; the sequence is KDQ. The Cysteine persulfide intermediate role is filled by C197. Residues 309 to 310 are interaction with tRNA; it reads RY.

This sequence belongs to the MnmA/TRMU family.

The protein localises to the cytoplasm. The catalysed reaction is S-sulfanyl-L-cysteinyl-[protein] + uridine(34) in tRNA + AH2 + ATP = 2-thiouridine(34) in tRNA + L-cysteinyl-[protein] + A + AMP + diphosphate + H(+). In terms of biological role, catalyzes the 2-thiolation of uridine at the wobble position (U34) of tRNA, leading to the formation of s(2)U34. This Francisella tularensis subsp. tularensis (strain FSC 198) protein is tRNA-specific 2-thiouridylase MnmA.